The chain runs to 461 residues: MGTPHLQGFLLLFPLLLRLHGASAGSLHSPGLSECFQVNGADYRGHQNYTGPRGAGRPCLFWDQTQQHSYSSASDPQGRWGLGAHNFCRNPDGDVQPWCYVAETEEGIYWRYCDIPTCHMPGYLGCFVDSGAPPALSGPSGTSTKLTVQVCLRFCRMKGYQLAGVEAGYACFCGSESDLARGRPAPATDCDQICFGHPGQLCGGDGRLGIYEVSVGSCQGNWSAPQGVIYSPDFPDEYGPDRNCSWVLGQLGAVLELTFRLFELADSRDRLELRDVSSGNLLRAFDGAHPPPPGPLRLRTAALLLTFRSDARGHAQGFALTYRGLQDTVEGRASPEDSTESLAGDPDGANASCSPKPGAAQASIGARVFSTVTAFSVLLLLLLSLLRLLRRRSCLLAPGKGSLAMGPSRGPGRSWAVWYRRPRGVALPCPPGDSQAEGPAAGYRPLSASSQSSLRSLVSAL.

The signal sequence occupies residues 1–24; the sequence is MGTPHLQGFLLLFPLLLRLHGASA. The Extracellular segment spans residues 25 to 363; sequence GSLHSPGLSE…SPKPGAAQAS (339 aa). Positions 34–118 constitute a Kringle domain; the sequence is ECFQVNGADY…YWRYCDIPTC (85 aa). 3 disulfides stabilise this stretch: Cys35–Cys118, Cys59–Cys99, and Cys88–Cys113. Residue Asn48 is glycosylated (N-linked (GlcNAc...) asparagine). Positions 120 to 214 constitute a WSC domain; sequence MPGYLGCFVD…DGRLGIYEVS (95 aa). Cys218 and Cys244 are oxidised to a cystine. Positions 218-325 constitute a CUB domain; it reads CQGNWSAPQG…QGFALTYRGL (108 aa). N-linked (GlcNAc...) asparagine glycosylation is found at Asn221, Asn243, and Asn350. Positions 329–357 are disordered; that stretch reads VEGRASPEDSTESLAGDPDGANASCSPKP. Residues 364–386 traverse the membrane as a helical segment; it reads IGARVFSTVTAFSVLLLLLLSLL. At 387–461 the chain is on the cytoplasmic side; sequence RLLRRRSCLL…SSLRSLVSAL (75 aa). Residues 429 to 452 form a disordered region; it reads CPPGDSQAEGPAAGYRPLSASSQS.

As to quaternary structure, interacts with ERLEC1. Forms a ternary complex with DKK1 and LRP6.

Its subcellular location is the membrane. Receptor for Dickkopf proteins. Cooperates with DKK1/2 to inhibit Wnt/beta-catenin signaling by promoting the endocytosis of Wnt receptors LRP5 and LRP6. Plays a role in limb development; attenuates Wnt signaling in the developing limb to allow normal limb patterning and can also negatively regulate bone formation. This is Kremen protein 2 (Kremen2) from Mus musculus (Mouse).